An 829-amino-acid polypeptide reads, in one-letter code: Probable beta-glucosidase H (829 aa).

The N-linked (GlcNAc...) asparagine glycan is linked to asparagine 13. Aspartate 225 is a catalytic residue. 5 N-linked (GlcNAc...) asparagine glycosylation sites follow: asparagine 304, asparagine 473, asparagine 602, asparagine 627, and asparagine 664. Residues 389–548 form the PA14 domain; that stretch reads RMLSNAVIHF…DPEQMVANAV (160 aa).

The protein belongs to the glycosyl hydrolase 3 family.

It is found in the secreted. The enzyme catalyses Hydrolysis of terminal, non-reducing beta-D-glucosyl residues with release of beta-D-glucose.. It participates in glycan metabolism; cellulose degradation. In terms of biological role, beta-glucosidases are one of a number of cellulolytic enzymes involved in the degradation of cellulosic biomass. Catalyzes the last step releasing glucose from the inhibitory cellobiose. The sequence is that of Probable beta-glucosidase H (bglH) from Aspergillus fumigatus (strain ATCC MYA-4609 / CBS 101355 / FGSC A1100 / Af293) (Neosartorya fumigata).